Here is a 61-residue protein sequence, read N- to C-terminus: Large ribosomal subunit protein uL30 (61 aa).

The protein belongs to the universal ribosomal protein uL30 family. In terms of assembly, part of the 50S ribosomal subunit.

The chain is Large ribosomal subunit protein uL30 from Nitrosomonas europaea (strain ATCC 19718 / CIP 103999 / KCTC 2705 / NBRC 14298).